A 66-amino-acid polypeptide reads, in one-letter code: Large ribosomal subunit protein uL30 (66 aa).

It belongs to the universal ribosomal protein uL30 family. As to quaternary structure, part of the 50S ribosomal subunit.

This chain is Large ribosomal subunit protein uL30, found in Brucella anthropi (strain ATCC 49188 / DSM 6882 / CCUG 24695 / JCM 21032 / LMG 3331 / NBRC 15819 / NCTC 12168 / Alc 37) (Ochrobactrum anthropi).